Here is a 154-residue protein sequence, read N- to C-terminus: Ferredoxin C 1, chloroplastic (154 aa).

The N-terminal 56 residues, 1-56 (MATLPLPTQTSTISLPKPYLSNSFSFPLRNATLSTTTNRRNFLTTGRIIARAYKVV), are a transit peptide targeting the chloroplast. Residues 57–142 (VEHDGKTTEL…DCHIKMIPEE (86 aa)) form the 2Fe-2S ferredoxin-type domain. [2Fe-2S] cluster contacts are provided by Cys89, Cys94, Cys97, and Cys126.

This sequence belongs to the 2Fe2S plant-type ferredoxin family. [2Fe-2S] cluster serves as cofactor.

It is found in the plastid. The protein resides in the chloroplast. Its function is as follows. Ferredoxins are iron-sulfur proteins that transfer electrons in a wide variety of metabolic reactions. Mediates alternative electron partitioning in conditions of acceptor limitation at photosystem I. Accepts electrons from photosystem I (PSI) and is capable of electron transfer with FNR, but cannot support photoreduction of NADP(+). This Arabidopsis thaliana (Mouse-ear cress) protein is Ferredoxin C 1, chloroplastic.